A 71-amino-acid chain; its full sequence is Vitellogenin-B2 (71 aa).

The signal sequence occupies residues 1–15; the sequence is MRGIILALLLALAGC. The Vitellogenin domain maps to 24–71; it reads FSESKTYVYNYEGIILNGIPENGLARSGIKLNCKVELSGYAQRSYMLK.

Produced by the liver, secreted into the blood and then sequestered by receptor mediated endocytosis into growing oocytes, where it is generally cleaved, giving rise to the respective yolk components.

Functionally, precursor of the major egg-yolk proteins that are sources of nutrients during early development of oviparous organisms. The protein is Vitellogenin-B2 of Xenopus laevis (African clawed frog).